A 303-amino-acid polypeptide reads, in one-letter code: MYYGFDIGGTKIALGVFDSTRRLQWEKRVPTPHTSYSAFLDAVCELVEEADQRFGVKGSVGIGIPGMPETEDGTLYAANVPAASGKPLRADLSARLDRDVRLDNDANCFALSEAWDDEFTQYPLVMGLILGTGVGGGLVLNGKPITGQSYITGEFGHMRLPVDALTLMGFDFPLRRCGCGQMGCIENYLSGRGFAWLYQHYYHQSLQAPEIIALWEQGDEQAHAHVERYLDLLAVCLGNILTIVDPDLLVIGGGLSNFTAITTQLAERLPRHLLPVARAPRIERARHGDAGGRRGAAFLHLTD.

Residues glycine 4–lysine 11 and glycine 133–leucine 140 contribute to the ATP site. The Zn(2+) site is built by histidine 157, cysteine 177, cysteine 179, and cysteine 184.

It belongs to the ROK (NagC/XylR) family. NagK subfamily.

The catalysed reaction is N-acetyl-D-glucosamine + ATP = N-acetyl-D-glucosamine 6-phosphate + ADP + H(+). Its pathway is cell wall biogenesis; peptidoglycan recycling. Its function is as follows. Catalyzes the phosphorylation of N-acetyl-D-glucosamine (GlcNAc) derived from cell-wall degradation, yielding GlcNAc-6-P. The polypeptide is N-acetyl-D-glucosamine kinase (Salmonella dublin (strain CT_02021853)).